The sequence spans 2275 residues: MPETVGHEEPALPSSPQAGGAVAYNAISKELQPLPPTETANGGIIPPASSRIEGSTGRLCALELEDGTVYQGYNFGAEKSVAGELVFQTGMVGYPESITDPSYRGQILVITFPLVGNYGVPSRETMDELLKTLPKHFESTEIHIAALVVATYAGENYSHFLAESSLGQWLKEQGVPAIHGVDTRALTKRIRQKGSMLGRLLLHKADVAETDAALAQDTWKSSFEQIDWVDPNTKNLVSEVSIREPKLFSPPENVALKHPSSRPIRVLCLDVGLKFNQLRCLVARGVEVLVVPWDYDFPTLAGKDYDGLFVSNGPGDPATMTTTVNNLAKTMQEARTPIFGICLGHQLIARSVGAQTLKMKFGNRGHNIPCTSLVTGKCHITSQNHGYAVDSSTLPSDWQELFVNANDGSNEGIRHVSRPYFSVQFHPESTPGPRDTEYLFDVFINAIKDTIASPEALQKPVNFPGGAVAENIKASPRVSVKKVLILGSGGLSIGQAGEFDYSGSQAIKALKEEGIYTILINPNIATIQTSKGLADKVYFLPVNADFVRKVIKHERPDAIYVTFGGQTALQVGIQLKDEFESLGVKVLGTPIDTIITTEDRELFARSMDSIGEKCAKSASASSLEEALQVVESIGFPVIVRAAYALGGLGSGFADNLDELKDLCAKAFAASPQVLIERSMKGWKEIEYEVVRDARDNCITVCNMENFDPLGIHTGDSIVVAPSQTLSDEDYNMLRTTAVNVIRHLGVVGECNIQYALNPYSKEYCIIEVNARLSRSSALASKATGYPLAFIAAKLGLNIPLNEIKNSVTKVTCACFEPSLDYCVVKIPRWDLKKFTRVSTQLGSSMKSVGEVMAIGRTFEEAIQKAIRSVDFHNLGFNETNALMSIKTELQTPSDQRLFAIANAMAAGYSVDDIWKLTNIDKWFLTRLKGLSDFGKLMTNYNASTVTAPLLRQAKQLGFSDRQLAKFLSSNELAIRRLRVEAGIIPIVKQIDTVAAEFPSVTNYLYLTYNASEHDVRFDDNGIMVLGSGVYRIGSSVEFDWCSVRTIRTLREQGHKTVMVNYNPETVSTDYDEADRLYFENINLETVLDIYQLESSSGVIMSMGGQTPNNIALPLHRLNVRILGTSPEMIDGAENRYKFSRMLDRIGVDQPAWKELTSIEEAREFCDKVGYPVLVRPSYVLSGAAMNTVYSEHDLASYLNQAADVSREHPVVITKYIENAKEIEMDAVARNGVMVGHFISEHVENAGVHSGDATLILPPQDLDPETVRRIEEATRKIGNALNVTGPFNIQFIAKDNDIKVIECNVRASRSFPFVSKVMGVDLIEMATKAMIGAPFAEYPPVTIPKDYVGVKVPQFSFSRLAGADPVLGVEMASTGEVASFGRDKYEAYLKALLSTGFKLPKRNILLSIGSYKEKMEMLPSIIKLRDVGFELFATSGTADFLKENGVPVKYLEILPGEDEDIKSEYSLTQHLANNLIDLYINLPSSNRFRRPANYMSKGYRTRRMAVDYQTPLVTNVKNAKILIEAIARHYALNVQTIDYQTSHRSIILPGLINVGAFVPGLGSADSKDFEAVTKASIAAGFSMIRVMPVGVDSSITDARTLKLVQQNAGKASFCDYNFSVVATSSNSAEVGQLTGEVGSLFIPFNHLSGNISKVAAVTSHFGAWPSSKPIITDAKSTDLASVLLLASLHSRNIHVMSVTSKEDIGLIALSKEKGLKVTCDVSIYCLFLSRDDYPEAAFLPTAEDQKALWEHLSTIDIFSIGSIPYQLAGEKGSPAAGIAEALPLLFTAVSEGRLTVEDIIARLYENPKKIFELHDQSDSSVEVEIDRPYLFQSAQAWSPFSGKSVKGLVQRVIFQGKTSCLDSEITPDAPKGSDMSGHRIVPASPSLKAMSPRVDGALDRRQSISIAGTPARLGRKPVDHFPAATGAELGPPLYTPVPRASSPLLQMLSRSPFKQKHVLSVNQFNRADLHLLFTVAQEMRLGVQREGVLDILKGRLLCTLFYEPSTRTSASFDAAMQRLGGRTIAISTEHSSTKKGETLQDTLRTLGCYGDAVVLRHPEPSSTEVAAKFSPVPVINGGNGSVEHPTQAFLDLFTIREELGTVGGLTITFTGDLKYGRPVHSLIKLLQFYDVRVQLVAPKDLSLPADIRQQLLATGQLLTESEELTPEIVARSDVLYSTRVQKERFADLEQYERLKNSFIIDNALLKHAKSHMVVMHPLPRNAEVSEEVDFDQRAAYFRQVSLQSRGPSSEFDMLMWMQMRYGLYCRMALLALIMAP.

The interval 1–440 (MPETVGHEEP…PGPRDTEYLF (440 aa)) is GATase (Glutamine amidotransferase). Residues Ser-102, Gly-313, and Gly-315 each contribute to the L-glutamine site. In terms of domain architecture, Glutamine amidotransferase type-1 spans 265 to 453 (RVLCLDVGLK…INAIKDTIAS (189 aa)). Cys-342 serves as the catalytic Nucleophile; for GATase activity. Residues Leu-343, Gln-346, Asn-384, Gly-386, and Tyr-387 each contribute to the L-glutamine site. Residues His-426 and Glu-428 each act as for GATase activity in the active site. Residues 441–482 (DVFINAIKDTIASPEALQKPVNFPGGAVAENIKASPRVSVKK) are linker. The segment at 483 to 1522 (VLILGSGGLS…TNVKNAKILI (1040 aa)) is CPSase (Carbamoyl-phosphate synthase). The ATP site is built by Arg-600, Arg-640, Gly-646, Gly-647, Arg-677, Met-679, Glu-684, Gly-710, Ile-711, His-712, Gln-753, and Glu-767. ATP-grasp domains follow at residues 604-796 (ARSM…KLGL) and 1139-1330 (SRML…KAMI). 3 residues coordinate Mg(2+): Gln-753, Glu-767, and Asn-769. Mn(2+) contacts are provided by Gln-753, Glu-767, and Asn-769. ATP is bound by residues Arg-1175, Lys-1214, Ile-1216, Glu-1221, Gly-1246, Val-1247, His-1248, Ser-1249, Gln-1289, and Glu-1301. Positions 1289, 1301, and 1303 each coordinate Mg(2+). Residues Gln-1289, Glu-1301, and Asn-1303 each coordinate Mn(2+). In terms of domain architecture, MGS-like spans 1396-1575 (FKLPKRNILL…KDFEAVTKAS (180 aa)). The linker stretch occupies residues 1523 to 1532 (EAIARHYALN). The segment at 1533–1862 (VQTIDYQTSH…FQGKTSCLDS (330 aa)) is defective DHOase domain. The tract at residues 1863-1882 (EITPDAPKGSDMSGHRIVPA) is disordered. Residues 1863 to 1953 (EITPDAPKGS…LQMLSRSPFK (91 aa)) form a linker region. Residues 1954–2258 (QKHVLSVNQF…EFDMLMWMQM (305 aa)) form an ATCase (Aspartate transcarbamylase) region. 2 residues coordinate carbamoyl phosphate: Arg-2006 and Thr-2007. Lys-2034 contacts L-aspartate. 3 residues coordinate carbamoyl phosphate: Arg-2055, His-2083, and Gln-2086. The L-aspartate site is built by Arg-2116 and Arg-2178. Carbamoyl phosphate-binding residues include Leu-2217 and Pro-2218.

It in the central section; belongs to the metallo-dependent hydrolases superfamily. DHOase family. CAD subfamily. The protein in the N-terminal section; belongs to the CarA family. In the 2nd section; belongs to the CarB family. This sequence in the 3rd section; belongs to the metallo-dependent hydrolases superfamily. DHOase family. CAD subfamily. It in the C-terminal section; belongs to the aspartate/ornithine carbamoyltransferase superfamily. ATCase family. Requires Mg(2+) as cofactor. The cofactor is Mn(2+).

The catalysed reaction is hydrogencarbonate + L-glutamine + 2 ATP + H2O = carbamoyl phosphate + L-glutamate + 2 ADP + phosphate + 2 H(+). The enzyme catalyses L-glutamine + H2O = L-glutamate + NH4(+). It carries out the reaction hydrogencarbonate + NH4(+) + 2 ATP = carbamoyl phosphate + 2 ADP + phosphate + 2 H(+). It catalyses the reaction carbamoyl phosphate + L-aspartate = N-carbamoyl-L-aspartate + phosphate + H(+). Its pathway is pyrimidine metabolism; UMP biosynthesis via de novo pathway; (S)-dihydroorotate from bicarbonate: step 1/3. It participates in pyrimidine metabolism; UMP biosynthesis via de novo pathway; (S)-dihydroorotate from bicarbonate: step 2/3. In terms of biological role, multifunctional protein that encodes the first 2 enzymatic activities of the de novo pyrimidine pathway: carbamoylphosphate synthetase (CPSase; EC 6.3.5.5) and aspartate transcarbamylase (ATCase; EC 2.1.3.2). The CPSase-function is accomplished in 2 steps, by a glutamine-dependent amidotransferase activity (GATase) that binds and cleaves glutamine to produce ammonia, followed by an ammonium-dependent carbamoyl phosphate synthetase, which reacts with the ammonia, hydrogencarbonate and ATP to form carbamoyl phosphate. The endogenously produced carbamoyl phosphate is sequestered and channeled to the ATCase active site. ATCase then catalyzes the formation of carbamoyl-L-aspartate from L-aspartate and carbamoyl phosphate. The chain is Multifunctional protein pyrABCN from Emericella nidulans (strain FGSC A4 / ATCC 38163 / CBS 112.46 / NRRL 194 / M139) (Aspergillus nidulans).